A 640-amino-acid polypeptide reads, in one-letter code: Threonine--tRNA ligase (640 aa).

In terms of domain architecture, TGS spans 1–61; sequence MLVVTLPDGS…DKDSQLAIIT (61 aa). The segment at 242–533 is catalytic; sequence DHRRLGKQLD…LIENHTGNMP (292 aa). Zn(2+) is bound by residues cysteine 333, histidine 384, and histidine 510.

The protein belongs to the class-II aminoacyl-tRNA synthetase family. In terms of assembly, homodimer. Requires Zn(2+) as cofactor.

It localises to the cytoplasm. It carries out the reaction tRNA(Thr) + L-threonine + ATP = L-threonyl-tRNA(Thr) + AMP + diphosphate + H(+). In terms of biological role, catalyzes the attachment of threonine to tRNA(Thr) in a two-step reaction: L-threonine is first activated by ATP to form Thr-AMP and then transferred to the acceptor end of tRNA(Thr). Also edits incorrectly charged L-seryl-tRNA(Thr). The protein is Threonine--tRNA ligase of Polynucleobacter necessarius subsp. necessarius (strain STIR1).